The sequence spans 578 residues: 65-kDa microtubule-associated protein 2 (578 aa).

5 coiled-coil regions span residues 64–84, 151–184, 235–257, 290–312, and 461–489; these read AELL…TTAL, DETD…VLEF, TLKE…LTDL, ALAL…LKSS, and AMLD…QQEQ. The span at 473–494 shows a compositional bias: basic and acidic residues; the sequence is REDEKRRLKEQKKQQEQPHTDQ. Residues 473–578 form a disordered region; the sequence is REDEKRRLKE…SRADPVMASP (106 aa). 2 positions are modified to phosphoserine: S503 and S532. The segment covering 549 to 558 has biased composition (polar residues); it reads KIASPSNIVA. S566, S569, and S577 each carry phosphoserine.

The protein belongs to the MAP65/ASE1 family. As to quaternary structure, forms a dimer. Binds to microtubules (MT). Bundles polymerized MT via the formation of 25-nm crossbridges with centrally located endocytic MT.

The protein resides in the nucleus. The protein localises to the cytoplasm. Its subcellular location is the cytoskeleton. It localises to the spindle pole. It is found in the phragmoplast. Microtubule-associated protein that stabilize microtubules (MT). Involved in the regulation of MT organization and dynamics. Confers MT resistance to the drug propyzamide and cold conditions. The protein is 65-kDa microtubule-associated protein 2 (MAP65-2) of Arabidopsis thaliana (Mouse-ear cress).